Here is an 883-residue protein sequence, read N- to C-terminus: Phosphoenolpyruvate carboxylase (883 aa).

Catalysis depends on residues His-138 and Lys-546.

Belongs to the PEPCase type 1 family. It depends on Mg(2+) as a cofactor.

The enzyme catalyses oxaloacetate + phosphate = phosphoenolpyruvate + hydrogencarbonate. Functionally, forms oxaloacetate, a four-carbon dicarboxylic acid source for the tricarboxylic acid cycle. In Enterobacter sp. (strain 638), this protein is Phosphoenolpyruvate carboxylase.